Consider the following 279-residue polypeptide: Putative pyruvate, phosphate dikinase regulatory protein (279 aa).

Position 154 to 161 (154 to 161 (GVSRTSKT)) interacts with ADP.

Belongs to the pyruvate, phosphate/water dikinase regulatory protein family. PDRP subfamily.

The enzyme catalyses N(tele)-phospho-L-histidyl/L-threonyl-[pyruvate, phosphate dikinase] + ADP = N(tele)-phospho-L-histidyl/O-phospho-L-threonyl-[pyruvate, phosphate dikinase] + AMP + H(+). The catalysed reaction is N(tele)-phospho-L-histidyl/O-phospho-L-threonyl-[pyruvate, phosphate dikinase] + phosphate + H(+) = N(tele)-phospho-L-histidyl/L-threonyl-[pyruvate, phosphate dikinase] + diphosphate. In terms of biological role, bifunctional serine/threonine kinase and phosphorylase involved in the regulation of the pyruvate, phosphate dikinase (PPDK) by catalyzing its phosphorylation/dephosphorylation. This Rhodopseudomonas palustris (strain BisB18) protein is Putative pyruvate, phosphate dikinase regulatory protein.